The sequence spans 311 residues: MALPILLDCDPGHDDAIAIVLALASPELDVKAITSSAGNQTPEKTLRNVLRMLTLLNRTDIPVASGAVKPLMRNLIIADNVHGESGLDGPALPEPTFAPQNCTAVELMAKTLRESEEPVTIVSTGPQTNVALLLNSHPELHSKIARIVIMGGAMGLGNWTPAAEFNIYVDPEAAEIVFQSGIPVVMAGLDVTHKAQIHVEDTERFRAIGNPVSTIVAELLDFFLEYHKDEKWGFVGAPLHDPCTIAWLLKPELFTTVERWVGVETQGKYTQGMTVVDYYYLTGNKPNATVMVDVDRQGFVDLLADRLKFYA.

The active site involves His-240.

Belongs to the IUNH family. RihA subfamily.

Hydrolyzes with equal efficiency cytidine or uridine to ribose and cytosine or uracil, respectively. This is Pyrimidine-specific ribonucleoside hydrolase RihA from Escherichia coli O45:K1 (strain S88 / ExPEC).